Reading from the N-terminus, the 2035-residue chain is Ral GTPase-activating protein subunit alpha-1 (2035 aa).

The segment at 343–384 (LVSREESKNDTVDKADKTAEPEQSHSNTSTLTEREPSSSSLC) is disordered. Basic and acidic residues predominate over residues 345–365 (SREESKNDTVDKADKTAEPEQ). Positions 366–384 (SHSNTSTLTEREPSSSSLC) are enriched in polar residues. Phosphoserine occurs at positions 710 and 720. The disordered stretch occupies residues 714–754 (SFSRGWSRDQPGQAPMRQRSATTTGSPGTEKARSIVRQKTV). T753 is modified (phosphothreonine). Position 772 is a phosphoserine (S772). T777 is subject to Phosphothreonine. At S796 the chain carries Phosphoserine. The segment covering 807–817 (ERAKVNKEDTS) has biased composition (basic and acidic residues). 2 disordered regions span residues 807–834 (ERAK…SANV) and 848–911 (SGNA…SHSD). Composition is skewed to polar residues over residues 824–833 (NSETGGSSAN) and 849–862 (GNAS…SSPG). Phosphoserine is present on residues S859, S860, and S863. Positions 894-911 (SPASAGSSDLMSSDSHSD) are enriched in low complexity. 4 positions are modified to phosphoserine: S985, S989, S993, and S999. Residues 986-1008 (ESASPVHSALGSRSQTPSPSTLN) are disordered. T1001 is subject to Phosphothreonine. Phosphoserine is present on residues S1003 and S1477. The tract at residues 1326–2034 (FTNKTVAHVA…PYHHFPADAD (709 aa)) is minimal domain that binds to TCF3/E12. The stretch at 1713-1746 (SEKQENDVINAILKQYTEEKEFVEKHFNDLNMKA) forms a coiled coil. Residues 1795–2003 (LRNLDSRQCR…EERARYLQTI (209 aa)) enclose the Rap-GAP domain.

As to quaternary structure, component of the heterodimeric RalGAP1 complex with RALGAPB. Heterodimerization is required for activity. Interacts with the HLH region of TCF3/isoform E12. As to expression, highly expressed in brain, thymus and testis with lower levels in lung and spleen and barely detectable in heart or liver (at protein level).

The protein localises to the cytoplasm. It is found in the nucleus. In terms of biological role, catalytic subunit of the heterodimeric RalGAP1 complex which acts as a GTPase activator for the Ras-like small GTPases RALA and RALB. This Rattus norvegicus (Rat) protein is Ral GTPase-activating protein subunit alpha-1 (Ralgapa1).